The following is a 337-amino-acid chain: 6-phosphogluconolactonase (337 aa).

Belongs to the cycloisomerase 2 family.

It catalyses the reaction 6-phospho-D-glucono-1,5-lactone + H2O = 6-phospho-D-gluconate + H(+). Its pathway is carbohydrate degradation; pentose phosphate pathway; D-ribulose 5-phosphate from D-glucose 6-phosphate (oxidative stage): step 2/3. In terms of biological role, catalyzes the hydrolysis of 6-phosphogluconolactone to 6-phosphogluconate. The protein is 6-phosphogluconolactonase of Blochmanniella pennsylvanica (strain BPEN).